The sequence spans 215 residues: Cytochrome b6 (215 aa).

A helical transmembrane segment spans residues 32 to 52; it reads IFYCLGGITLTCFLVQVATGF. Cysteine 35 serves as a coordination point for heme c. 2 residues coordinate heme b: histidine 86 and histidine 100. The next 3 helical transmembrane spans lie at 90–110, 116–136, and 186–206; these read ASMMVLMMILHVFRVYLTGGF, LTWVTGVVLGVLTASFGVTGY, and LHTFVLPLLTAVFMLMHFLMI. Histidine 187 and histidine 202 together coordinate heme b.

The protein belongs to the cytochrome b family. PetB subfamily. The 4 large subunits of the cytochrome b6-f complex are cytochrome b6, subunit IV (17 kDa polypeptide, PetD), cytochrome f and the Rieske protein, while the 4 small subunits are PetG, PetL, PetM and PetN. The complex functions as a dimer. Heme b is required as a cofactor. It depends on heme c as a cofactor.

Its subcellular location is the plastid. It localises to the chloroplast thylakoid membrane. In terms of biological role, component of the cytochrome b6-f complex, which mediates electron transfer between photosystem II (PSII) and photosystem I (PSI), cyclic electron flow around PSI, and state transitions. The chain is Cytochrome b6 from Arabidopsis thaliana (Mouse-ear cress).